We begin with the raw amino-acid sequence, 520 residues long: Cholesterol side-chain cleavage enzyme, mitochondrial (520 aa).

Residues 1-39 constitute a mitochondrion transit peptide; it reads MLVRGLPLRSVLVKGCQPLLSAPREGPGHPRVPTGEGAG. The tract at residues 19–47 is disordered; sequence LLSAPREGPGHPRVPTGEGAGMSSHSPRP. Cys461 lines the heme pocket.

The protein belongs to the cytochrome P450 family. As to quaternary structure, interacts with FDX1/adrenodoxin. The cofactor is heme.

Its subcellular location is the mitochondrion inner membrane. The catalysed reaction is 6 reduced [adrenodoxin] + cholesterol + 3 O2 + 6 H(+) = 4-methylpentanal + pregnenolone + 6 oxidized [adrenodoxin] + 4 H2O. The enzyme catalyses 2 reduced [adrenodoxin] + cholesterol + O2 + 2 H(+) = (22R)-hydroxycholesterol + 2 oxidized [adrenodoxin] + H2O. It catalyses the reaction (22R)-hydroxycholesterol + 2 reduced [adrenodoxin] + O2 + 2 H(+) = (20R,22R)-20,22-dihydroxycholesterol + 2 oxidized [adrenodoxin] + H2O. It carries out the reaction (20R,22R)-20,22-dihydroxycholesterol + 2 reduced [adrenodoxin] + O2 + 2 H(+) = 4-methylpentanal + pregnenolone + 2 oxidized [adrenodoxin] + 2 H2O. It participates in lipid metabolism; C21-steroid hormone metabolism. The protein operates within steroid metabolism; cholesterol metabolism. Functionally, a cytochrome P450 monooxygenase that catalyzes the side-chain hydroxylation and cleavage of cholesterol to pregnenolone, the precursor of most steroid hormones. Catalyzes three sequential oxidation reactions of cholesterol, namely the hydroxylation at C22 followed with the hydroxylation at C20 to yield 20R,22R-hydroxycholesterol that is further cleaved between C20 and C22 to yield the C21-steroid pregnenolone and 4-methylpentanal. Mechanistically, uses molecular oxygen inserting one oxygen atom into a substrate and reducing the second into a water molecule. Two electrons are provided by NADPH via a two-protein mitochondrial transfer system comprising flavoprotein FDXR (adrenodoxin/ferredoxin reductase) and nonheme iron-sulfur protein FDX1 or FDX2 (adrenodoxin/ferredoxin). The chain is Cholesterol side-chain cleavage enzyme, mitochondrial (CYP11A1) from Equus caballus (Horse).